The chain runs to 2498 residues: PKS-NRPS hybrid synthetase acdB (2498 aa).

The adenylation (A) domain stretch occupies residues 34 to 427 (FEQAAHAHFD…GRADSQVKIR (394 aa)). Residues 531–606 (QPATELERDI…SLAGYLMDMD (76 aa)) form the Carrier 1 domain. S566 carries the O-(pantetheine 4'-phosphoryl)serine modification. One can recognise a Ketosynthase family 3 (KS3) domain in the interval 627 to 1058 (SDDIAVVSMA…GTNAHVIVEE (432 aa)). Active-site for beta-ketoacyl synthase activity residues include C802, H938, and H979. The malonyl-CoA:ACP transacylase (MAT) domain stretch occupies residues 1165 to 1485 (LFAGQGSQQL…EILARLHVQH (321 aa)). Residues 1739-1917 (GAVLITGGLS…PAVCVAYGPL (179 aa)) form a ketoreductase (KR) domain region. A Carrier 2 domain is found at 2017–2092 (EILLRTIQEA…ELSRYLLPQL (76 aa)). S2052 carries the O-(pantetheine 4'-phosphoryl)serine modification. The thioester reductase (TE) domain stretch occupies residues 2149-2378 (VTGATEFVGA…FPVDYVCRTI (230 aa)).

The protein in the C-terminal section; belongs to the NRP synthetase family. It depends on pantetheine 4'-phosphate as a cofactor.

Its pathway is secondary metabolite biosynthesis. Its function is as follows. PKS-NRPS hybrid synthetase; part of the gene cluster that mediates the biosynthesis of aspcandine, a pyrrolobenzazepine alkaloid. Initially, the indoleamine 2,3-dioxygenase acdA accepts L-tryptophan and performs the oxidative opening of the indole ring to yield N'-formyl-L-kynurenine, which undergoes the spontaneous deformylation reaction to provide L-kynurenine. The kynurenine 3-monooxygenase acdD then hydroxylates L-kynurenine to afford 3-hydroxy-L-kynurenine. 3-hydroxy-L-kynurenine is activated by the A domain of the NRPS-PKS acdB and subsequently loaded onto the enzyme. The KS domain conducts the decarboxylative condensation of the 3-hydroxy-L-kynurenyl and malonyl moieties, and subsequent nucleophilic attacks by the two amino groups would occur nonenzymatically at two distinct positions, achieving the chain release and the construction of the tricyclic system. Finally, a dehydration reaction completes the biosynthesis to yield aspcandine. The chain is PKS-NRPS hybrid synthetase acdB from Aspergillus candidus.